We begin with the raw amino-acid sequence, 120 residues long: NAD(P)H-quinone oxidoreductase subunit 3 (120 aa).

Transmembrane regions (helical) follow at residues 10–30 (FLGFLLIAAAVPVLALVTNLI), 64–84 (MFALVFVIFDVETVFLYPWAV), and 89–109 (LGLLAFIEALIFIAILVIALA).

Belongs to the complex I subunit 3 family. As to quaternary structure, NDH-1 can be composed of about 15 different subunits; different subcomplexes with different compositions have been identified which probably have different functions.

The protein localises to the cellular thylakoid membrane. It catalyses the reaction a plastoquinone + NADH + (n+1) H(+)(in) = a plastoquinol + NAD(+) + n H(+)(out). The enzyme catalyses a plastoquinone + NADPH + (n+1) H(+)(in) = a plastoquinol + NADP(+) + n H(+)(out). Functionally, NDH-1 shuttles electrons from an unknown electron donor, via FMN and iron-sulfur (Fe-S) centers, to quinones in the respiratory and/or the photosynthetic chain. The immediate electron acceptor for the enzyme in this species is believed to be plastoquinone. Couples the redox reaction to proton translocation, and thus conserves the redox energy in a proton gradient. Cyanobacterial NDH-1 also plays a role in inorganic carbon-concentration. This is NAD(P)H-quinone oxidoreductase subunit 3 from Prochlorococcus marinus (strain MIT 9301).